Consider the following 455-residue polypeptide: Ribulose bisphosphate carboxylase large chain (455 aa).

Lys-5 carries the N6,N6,N6-trimethyllysine modification. Residues Asn-114 and Thr-164 each contribute to the substrate site. The active-site Proton acceptor is the Lys-166. Lys-168 is a binding site for substrate. Mg(2+) is bound by residues Lys-192, Asp-194, and Glu-195. Lys-192 bears the N6-carboxylysine mark. Residue His-285 is the Proton acceptor of the active site. 3 residues coordinate substrate: Arg-286, His-318, and Ser-370.

This sequence belongs to the RuBisCO large chain family. Type I subfamily. In terms of assembly, heterohexadecamer of 8 large chains and 8 small chains; disulfide-linked. The disulfide link is formed within the large subunit homodimers. Requires Mg(2+) as cofactor. Post-translationally, the disulfide bond which can form in the large chain dimeric partners within the hexadecamer appears to be associated with oxidative stress and protein turnover.

The protein localises to the plastid. Its subcellular location is the chloroplast. The catalysed reaction is 2 (2R)-3-phosphoglycerate + 2 H(+) = D-ribulose 1,5-bisphosphate + CO2 + H2O. It catalyses the reaction D-ribulose 1,5-bisphosphate + O2 = 2-phosphoglycolate + (2R)-3-phosphoglycerate + 2 H(+). Its function is as follows. RuBisCO catalyzes two reactions: the carboxylation of D-ribulose 1,5-bisphosphate, the primary event in carbon dioxide fixation, as well as the oxidative fragmentation of the pentose substrate in the photorespiration process. Both reactions occur simultaneously and in competition at the same active site. This Lupinus luteus (European yellow lupine) protein is Ribulose bisphosphate carboxylase large chain.